Consider the following 159-residue polypeptide: 2-C-methyl-D-erythritol 2,4-cyclodiphosphate synthase (159 aa).

A divalent metal cation is bound by residues D8 and H10. 4-CDP-2-C-methyl-D-erythritol 2-phosphate-binding positions include D8 to H10 and H34 to S35. H42 contributes to the a divalent metal cation binding site. Residues D56–G58, F61–D65, A100–L106, T132–E135, F139, and R142 each bind 4-CDP-2-C-methyl-D-erythritol 2-phosphate.

Belongs to the IspF family. As to quaternary structure, homotrimer. It depends on a divalent metal cation as a cofactor.

It catalyses the reaction 4-CDP-2-C-methyl-D-erythritol 2-phosphate = 2-C-methyl-D-erythritol 2,4-cyclic diphosphate + CMP. The protein operates within isoprenoid biosynthesis; isopentenyl diphosphate biosynthesis via DXP pathway; isopentenyl diphosphate from 1-deoxy-D-xylulose 5-phosphate: step 4/6. In terms of biological role, involved in the biosynthesis of isopentenyl diphosphate (IPP) and dimethylallyl diphosphate (DMAPP), two major building blocks of isoprenoid compounds. Catalyzes the conversion of 4-diphosphocytidyl-2-C-methyl-D-erythritol 2-phosphate (CDP-ME2P) to 2-C-methyl-D-erythritol 2,4-cyclodiphosphate (ME-CPP) with a corresponding release of cytidine 5-monophosphate (CMP). In Escherichia coli O127:H6 (strain E2348/69 / EPEC), this protein is 2-C-methyl-D-erythritol 2,4-cyclodiphosphate synthase.